Here is a 241-residue protein sequence, read N- to C-terminus: Probable transcriptional regulatory protein Rmet_0785 (241 aa).

This sequence belongs to the TACO1 family.

Its subcellular location is the cytoplasm. This chain is Probable transcriptional regulatory protein Rmet_0785, found in Cupriavidus metallidurans (strain ATCC 43123 / DSM 2839 / NBRC 102507 / CH34) (Ralstonia metallidurans).